The chain runs to 354 residues: G protein alpha o subunit (354 aa).

Residue Gly-2 is the site of N-myristoyl glycine attachment. The S-palmitoyl cysteine moiety is linked to residue Cys-3. One can recognise a G-alpha domain in the interval 32 to 354 (KDIKLLLLGA…ANNLRGCGLY (323 aa)). The segment at 35–48 (KLLLLGAGESGKST) is G1 motif. GTP contacts are provided by residues 40–47 (GAGESGKS), 176–182 (LRTRVKT), 201–205 (DVGGQ), 270–273 (NKKD), and Ala-326. Residues Ser-47 and Thr-182 each coordinate Mg(2+). The interval 174–182 (DILRTRVKT) is G2 motif. Residues 197–206 (FKLFDVGGQR) form a G3 motif region. The segment at 266-273 (ILFLNKKD) is G4 motif. The tract at residues 324-329 (TCATDT) is G5 motif.

This sequence belongs to the G-alpha family. G(i/o/t/z) subfamily. As to quaternary structure, g proteins are composed of 3 units; alpha, beta and gamma. The alpha chain contains the guanine nucleotide binding site. In terms of tissue distribution, expressed primarily in neuronal cell bodies in the brain, optic lobe, and thoracic and abdominal ganglia. Also expressed in antenna, oocytes and ovarian nurse cells.

Guanine nucleotide-binding proteins (G proteins) are involved as modulators or transducers in various transmembrane signaling systems. Plays a role in glial cell differentiation during embryogenesis; loco, Galphai and the G-protein coupled receptor, moody, are required in the surface glia to achieve effective insulation of the nerve cord. The polypeptide is G protein alpha o subunit (Galphao) (Drosophila melanogaster (Fruit fly)).